The primary structure comprises 290 residues: Phosphate import ATP-binding protein PstB (290 aa).

The 261-residue stretch at 25 to 285 folds into the ABC transporter domain; it reads LEARNLDFYY…PKTRRARDYL (261 aa). 57–64 provides a ligand contact to ATP; it reads GPSGCGKS.

Belongs to the ABC transporter superfamily. Phosphate importer (TC 3.A.1.7) family. The complex is composed of two ATP-binding proteins (PstB), two transmembrane proteins (PstC and PstA) and a solute-binding protein (PstS).

The protein localises to the cell inner membrane. It carries out the reaction phosphate(out) + ATP + H2O = ADP + 2 phosphate(in) + H(+). Functionally, part of the ABC transporter complex PstSACB involved in phosphate import. Responsible for energy coupling to the transport system. This Zymomonas mobilis subsp. mobilis (strain ATCC 31821 / ZM4 / CP4) protein is Phosphate import ATP-binding protein PstB.